The primary structure comprises 462 residues: tRNA-2-methylthio-N(6)-dimethylallyladenosine synthase (462 aa).

Positions 28-144 (KKLFVKTYGC…LPKMMEAVNA (117 aa)) constitute an MTTase N-terminal domain. Residues cysteine 37, cysteine 73, cysteine 107, cysteine 181, cysteine 185, and cysteine 188 each contribute to the [4Fe-4S] cluster site. The region spanning 167-398 (ATRGPTAFLT…QALLTQQQRA (232 aa)) is the Radical SAM core domain. Positions 401–462 (DAMVGRRVKV…KTNSLTGRLV (62 aa)) constitute a TRAM domain.

It belongs to the methylthiotransferase family. MiaB subfamily. As to quaternary structure, monomer. Requires [4Fe-4S] cluster as cofactor.

It localises to the cytoplasm. The enzyme catalyses N(6)-dimethylallyladenosine(37) in tRNA + (sulfur carrier)-SH + AH2 + 2 S-adenosyl-L-methionine = 2-methylsulfanyl-N(6)-dimethylallyladenosine(37) in tRNA + (sulfur carrier)-H + 5'-deoxyadenosine + L-methionine + A + S-adenosyl-L-homocysteine + 2 H(+). Its function is as follows. Catalyzes the methylthiolation of N6-(dimethylallyl)adenosine (i(6)A), leading to the formation of 2-methylthio-N6-(dimethylallyl)adenosine (ms(2)i(6)A) at position 37 in tRNAs that read codons beginning with uridine. This Jannaschia sp. (strain CCS1) protein is tRNA-2-methylthio-N(6)-dimethylallyladenosine synthase.